We begin with the raw amino-acid sequence, 415 residues long: ATP-dependent Clp protease ATP-binding subunit ClpX (415 aa).

Residues 1–52 form the ClpX-type ZB domain; that stretch reads MAESKNNKKRCSFCGRSENEVGFLITGMNGYICDSCATQAYEITQEAMGAGK. The Zn(2+) site is built by Cys-11, Cys-14, Cys-33, and Cys-36. Position 121–128 (121–128) interacts with ATP; sequence STGTGKTL.

It belongs to the ClpX chaperone family. As to quaternary structure, component of the ClpX-ClpP complex. Forms a hexameric ring that, in the presence of ATP, binds to fourteen ClpP subunits assembled into a disk-like structure with a central cavity, resembling the structure of eukaryotic proteasomes.

Functionally, ATP-dependent specificity component of the Clp protease. It directs the protease to specific substrates. Can perform chaperone functions in the absence of ClpP. This is ATP-dependent Clp protease ATP-binding subunit ClpX from Bacteroides fragilis (strain ATCC 25285 / DSM 2151 / CCUG 4856 / JCM 11019 / LMG 10263 / NCTC 9343 / Onslow / VPI 2553 / EN-2).